The primary structure comprises 226 residues: Ribosome-recycling factor, mitochondrial (226 aa).

The protein belongs to the RRF family.

It is found in the mitochondrion. In terms of biological role, necessary for protein synthesis in mitochondria. Functions as a ribosome recycling factor in mitochondria. In Eremothecium gossypii (strain ATCC 10895 / CBS 109.51 / FGSC 9923 / NRRL Y-1056) (Yeast), this protein is Ribosome-recycling factor, mitochondrial (RRF1).